We begin with the raw amino-acid sequence, 1342 residues long: DNA-directed RNA polymerase subunit beta (1342 aa).

The protein belongs to the RNA polymerase beta chain family. As to quaternary structure, the RNAP catalytic core consists of 2 alpha, 1 beta, 1 beta' and 1 omega subunit. When a sigma factor is associated with the core the holoenzyme is formed, which can initiate transcription.

It catalyses the reaction RNA(n) + a ribonucleoside 5'-triphosphate = RNA(n+1) + diphosphate. Functionally, DNA-dependent RNA polymerase catalyzes the transcription of DNA into RNA using the four ribonucleoside triphosphates as substrates. In Pectobacterium atrosepticum (strain SCRI 1043 / ATCC BAA-672) (Erwinia carotovora subsp. atroseptica), this protein is DNA-directed RNA polymerase subunit beta.